Reading from the N-terminus, the 421-residue chain is Vinorine synthase (421 aa).

Catalysis depends on proton acceptor residues His-160 and Asp-362.

It belongs to the plant acyltransferase family. Monomer. As to expression, mainly expressed in roots and, to a lower level, in leaves.

The catalysed reaction is 16-epivellosimine + acetyl-CoA = vinorine + CoA. The protein operates within alkaloid biosynthesis; ajmaline biosynthesis. Its activity is regulated as follows. Complete inhibition by 4-(2-aminoethyl)-benzenesulfonyl fluoride (AEBSF), N-tosyl-L-phenylalanine chloromethylketone (TPCK), Hg(2+) and diethyl-pyrocarbonate (DEPC). 50% inhibition by N-(N-(L-3-trans-carboxirane-2-carbonyl)-L-leucyl)-agmanitine (E-64), N-alpha-p-tosyl-L-lysine chloromethylketone (TLCK) and phenylmethylsulfonyl fluoride (PMSF). Its function is as follows. Acetyltransferase involved in the biosynthesis of ajmaline-type monoterpenoid indole alkaloids (MIAs) natural products, important plant-derived pharmaceuticals used in the therapy of heart disorders. Catalyzes the conversion of 16-epivellosimine to vinorine, precursor of vomilenine, an intermediate chemical in the biosynthesis of ajmaline. Acts on gardneral, but not on polyneuridine aldehyde or N-methylgardneral. The polypeptide is Vinorine synthase (Rauvolfia serpentina (Serpentine wood)).